The sequence spans 833 residues: Leucine--tRNA ligase (833 aa).

The short motif at 41-52 (PYPSGAGLHVGH) is the 'HIGH' region element. Residues 610–614 (KMSKS) carry the 'KMSKS' region motif. ATP is bound at residue lysine 613.

It belongs to the class-I aminoacyl-tRNA synthetase family.

Its subcellular location is the cytoplasm. The catalysed reaction is tRNA(Leu) + L-leucine + ATP = L-leucyl-tRNA(Leu) + AMP + diphosphate. The polypeptide is Leucine--tRNA ligase (Streptococcus pneumoniae serotype 4 (strain ATCC BAA-334 / TIGR4)).